A 283-amino-acid polypeptide reads, in one-letter code: ATP phosphoribosyltransferase (283 aa).

It belongs to the ATP phosphoribosyltransferase family. Long subfamily. The cofactor is Mg(2+).

Its subcellular location is the cytoplasm. The enzyme catalyses 1-(5-phospho-beta-D-ribosyl)-ATP + diphosphate = 5-phospho-alpha-D-ribose 1-diphosphate + ATP. The protein operates within amino-acid biosynthesis; L-histidine biosynthesis; L-histidine from 5-phospho-alpha-D-ribose 1-diphosphate: step 1/9. With respect to regulation, feedback inhibited by histidine. In terms of biological role, catalyzes the condensation of ATP and 5-phosphoribose 1-diphosphate to form N'-(5'-phosphoribosyl)-ATP (PR-ATP). Has a crucial role in the pathway because the rate of histidine biosynthesis seems to be controlled primarily by regulation of HisG enzymatic activity. The polypeptide is ATP phosphoribosyltransferase (Bacteroides thetaiotaomicron (strain ATCC 29148 / DSM 2079 / JCM 5827 / CCUG 10774 / NCTC 10582 / VPI-5482 / E50)).